The primary structure comprises 228 residues: Large ribosomal subunit protein uL4 (228 aa).

Disordered regions lie at residues glycine 45–threonine 102 and proline 208–glutamine 228. Residues proline 208–glycine 221 are compositionally biased toward low complexity.

The protein belongs to the universal ribosomal protein uL4 family. In terms of assembly, part of the 50S ribosomal subunit.

One of the primary rRNA binding proteins, this protein initially binds near the 5'-end of the 23S rRNA. It is important during the early stages of 50S assembly. It makes multiple contacts with different domains of the 23S rRNA in the assembled 50S subunit and ribosome. Its function is as follows. Forms part of the polypeptide exit tunnel. The chain is Large ribosomal subunit protein uL4 from Saccharopolyspora erythraea (strain ATCC 11635 / DSM 40517 / JCM 4748 / NBRC 13426 / NCIMB 8594 / NRRL 2338).